Here is a 324-residue protein sequence, read N- to C-terminus: Protein GET4 (324 aa).

The protein belongs to the GET4 family. As to quaternary structure, interacts with GET3A.

It is found in the cytoplasm. The protein resides in the cytosol. Involved in the regulation of root hair growth. This Arabidopsis thaliana (Mouse-ear cress) protein is Protein GET4.